The chain runs to 409 residues: Patellin-6 (409 aa).

The region spanning 116–294 (EKLTEEDLGF…QYGGLSRPTD (179 aa)) is the CRAL-TRIO domain. The GOLD domain maps to 270-404 (AETLYKFIRP…VAAYRYTVRK (135 aa)).

It belongs to the patellin family.

The protein localises to the membrane. It localises to the cytoplasm. In terms of biological role, carrier protein that may be involved in membrane-trafficking events associated with cell-plate formation during cytokinesis. Binds to some hydrophobic molecules such as phosphoinositides and promotes their transfer between the different cellular sites. This is Patellin-6 (PATL6) from Arabidopsis thaliana (Mouse-ear cress).